A 926-amino-acid chain; its full sequence is Up-regulator of cell proliferation (926 aa).

Residue Ser3 is modified to Phosphoserine. Residues 689–924 (RSRLVVLSAL…NIQQLIELLR (236 aa)) form the VLIG-type G domain.

Belongs to the TRAFAC class dynamin-like GTPase superfamily. Very large inducible GTPase (VLIG) family.

The protein resides in the cytoplasm. It localises to the nucleus. Functionally, may be involved in cell cycle progression through the regulation of cyclin D1 expression. In Mus musculus (Mouse), this protein is Up-regulator of cell proliferation (Urgcp).